The chain runs to 88 residues: Putative regulatory protein Npun_R3866 (88 aa).

This sequence belongs to the RemA family.

This is Putative regulatory protein Npun_R3866 from Nostoc punctiforme (strain ATCC 29133 / PCC 73102).